A 213-amino-acid chain; its full sequence is Small ribosomal subunit protein uS3 (213 aa).

The KH type-2 domain occupies 38–106 (IRSYIKKLLY…EFSLEVTEVR (69 aa)).

This sequence belongs to the universal ribosomal protein uS3 family. Part of the 30S ribosomal subunit. Forms a tight complex with proteins S10 and S14.

Binds the lower part of the 30S subunit head. Binds mRNA in the 70S ribosome, positioning it for translation. The chain is Small ribosomal subunit protein uS3 from Lawsonia intracellularis (strain PHE/MN1-00).